Reading from the N-terminus, the 272-residue chain is Large ribosomal subunit protein uL3 (272 aa).

The tract at residues 125 to 146 is disordered; that stretch reads QHIGPKSHGGGGGSQPLRQTGS.

It belongs to the universal ribosomal protein uL3 family. In terms of assembly, part of the 50S ribosomal subunit. Forms a cluster with proteins L14 and L19.

Its function is as follows. One of the primary rRNA binding proteins, it binds directly near the 3'-end of the 23S rRNA, where it nucleates assembly of the 50S subunit. The protein is Large ribosomal subunit protein uL3 of Metamycoplasma arthritidis (strain 158L3-1) (Mycoplasma arthritidis).